Consider the following 291-residue polypeptide: MSASKILSQKIKVALVQLSGSSPDKMANLQRAATFIERAMKEQPDTKLVVLPECFNSPYSTDQFRKYSEVINPKEPSTSVQFLSNLANKFKIILVGGTIPELDPKTDKIYNTSIIFNEDGKLIDKHRKVHLFDVDIPNGISFHESETLSPGEKSTTIDTKYGKFGVGICYDMRFPELAMLSARKGAFAMIYPSAFNTVTGPLHWHLLARSRAVDNQVYVMLCSPARNLQSSYHAYGHSIVVDPRGKIVAEAGEGEEIIYAELDPEVIESFRQAVPLTKQRRFDVYSDVNAH.

In terms of domain architecture, CN hydrolase spans 11–264 (IKVALVQLSG…EEIIYAELDP (254 aa)). Thr34 carries the phosphothreonine modification. Glu53 serves as the catalytic Proton acceptor. The active-site Proton donor is Lys128. The active-site Nucleophile is Cys169.

Belongs to the carbon-nitrogen hydrolase superfamily. NIT1/NIT2 family. In terms of assembly, homodimer.

It catalyses the reaction a monoamide of a dicarboxylate + H2O = a dicarboxylate + NH4(+). Possesses omega-amidase activity. The role of omega-amidase is to remove potentially toxic intermediates by converting 2-oxoglutaramate and 2-oxosuccinamate to biologically useful 2-oxoglutarate and oxaloacetate, respectively. The chain is Omega-amidase NIT3 (NIT3) from Saccharomyces cerevisiae (strain ATCC 204508 / S288c) (Baker's yeast).